We begin with the raw amino-acid sequence, 548 residues long: Chaperonin GroEL (548 aa).

ATP is bound by residues 30 to 33 (TLGP), Lys-51, 87 to 91 (DGTTT), Gly-415, 478 to 480 (NAA), and Asp-494.

It belongs to the chaperonin (HSP60) family. As to quaternary structure, forms a cylinder of 14 subunits composed of two heptameric rings stacked back-to-back. Interacts with the co-chaperonin GroES.

It localises to the cytoplasm. It carries out the reaction ATP + H2O + a folded polypeptide = ADP + phosphate + an unfolded polypeptide.. Functionally, together with its co-chaperonin GroES, plays an essential role in assisting protein folding. The GroEL-GroES system forms a nano-cage that allows encapsulation of the non-native substrate proteins and provides a physical environment optimized to promote and accelerate protein folding. The protein is Chaperonin GroEL of Trichlorobacter lovleyi (strain ATCC BAA-1151 / DSM 17278 / SZ) (Geobacter lovleyi).